A 149-amino-acid polypeptide reads, in one-letter code: D-aminoacyl-tRNA deacylase (149 aa).

The Gly-cisPro motif, important for rejection of L-amino acids motif lies at 137 to 138 (GP).

Belongs to the DTD family. In terms of assembly, homodimer.

It is found in the cytoplasm. It carries out the reaction glycyl-tRNA(Ala) + H2O = tRNA(Ala) + glycine + H(+). The enzyme catalyses a D-aminoacyl-tRNA + H2O = a tRNA + a D-alpha-amino acid + H(+). Its function is as follows. An aminoacyl-tRNA editing enzyme that deacylates mischarged D-aminoacyl-tRNAs. Also deacylates mischarged glycyl-tRNA(Ala), protecting cells against glycine mischarging by AlaRS. Acts via tRNA-based rather than protein-based catalysis; rejects L-amino acids rather than detecting D-amino acids in the active site. By recycling D-aminoacyl-tRNA to D-amino acids and free tRNA molecules, this enzyme counteracts the toxicity associated with the formation of D-aminoacyl-tRNA entities in vivo and helps enforce protein L-homochirality. This Thermosipho africanus (strain TCF52B) protein is D-aminoacyl-tRNA deacylase.